Consider the following 594-residue polypeptide: Golgi-associated RAB2 interactor protein 4 (594 aa).

A disordered region spans residues 387-524 (MDAAAGPPVS…TSSGSSKGLG (138 aa)). Polar residues predominate over residues 396–406 (STRQSKSSLSG). 3 stretches are compositionally biased toward basic and acidic residues: residues 408-433 (HGRERTQASAEGCKEGRERREKDRAL), 442-455 (TGESRHKTRGDKIA), and 468-477 (ANRDDKKEKG). Residues 511–520 (SLWTTSSGSS) show a composition bias toward polar residues.

This sequence belongs to the GARIN family. In terms of assembly, interacts (via N-terminus) with RAB2B (in GTP-bound form).

The protein resides in the golgi apparatus. Its function is as follows. RAB2B effector protein required for the compacted Golgi morphology, probably through interaction with small GTPase RAB2B. The polypeptide is Golgi-associated RAB2 interactor protein 4 (Homo sapiens (Human)).